A 393-amino-acid chain; its full sequence is Formate-dependent phosphoribosylglycinamide formyltransferase (393 aa).

Residues 22-23 (EL) and E82 each bind N(1)-(5-phospho-beta-D-ribosyl)glycinamide. ATP is bound by residues R114, K155, 160-165 (SSGKGQ), 195-198 (EGFI), and E203. The 190-residue stretch at 119–308 (RLAAEELDLP…QFALHARAIL (190 aa)) folds into the ATP-grasp domain. 2 residues coordinate Mg(2+): E267 and E279. N(1)-(5-phospho-beta-D-ribosyl)glycinamide-binding positions include D286, K356, and 363–364 (RR).

Belongs to the PurK/PurT family. In terms of assembly, homodimer.

The catalysed reaction is N(1)-(5-phospho-beta-D-ribosyl)glycinamide + formate + ATP = N(2)-formyl-N(1)-(5-phospho-beta-D-ribosyl)glycinamide + ADP + phosphate + H(+). The protein operates within purine metabolism; IMP biosynthesis via de novo pathway; N(2)-formyl-N(1)-(5-phospho-D-ribosyl)glycinamide from N(1)-(5-phospho-D-ribosyl)glycinamide (formate route): step 1/1. In terms of biological role, involved in the de novo purine biosynthesis. Catalyzes the transfer of formate to 5-phospho-ribosyl-glycinamide (GAR), producing 5-phospho-ribosyl-N-formylglycinamide (FGAR). Formate is provided by PurU via hydrolysis of 10-formyl-tetrahydrofolate. This is Formate-dependent phosphoribosylglycinamide formyltransferase from Pseudomonas fluorescens (strain ATCC BAA-477 / NRRL B-23932 / Pf-5).